A 328-amino-acid chain; its full sequence is Malate dehydrogenase (328 aa).

G12–A18 is an NAD(+) binding site. Residues R93 and R99 each contribute to the substrate site. NAD(+) is bound by residues N106, Q113, and V130–N132. Substrate is bound by residues N132 and R163. H188 serves as the catalytic Proton acceptor.

It belongs to the LDH/MDH superfamily. MDH type 2 family.

The enzyme catalyses (S)-malate + NAD(+) = oxaloacetate + NADH + H(+). Catalyzes the reversible oxidation of malate to oxaloacetate. This Burkholderia multivorans (strain ATCC 17616 / 249) protein is Malate dehydrogenase.